Reading from the N-terminus, the 153-residue chain is SKP1-like protein 5 (153 aa).

Residues 90 to 153 are interaction with the F-box domain of F-box proteins; that stretch reads MMAANYLNIQ…IREENQWAFQ (64 aa).

Belongs to the SKP1 family. As to quaternary structure, part of a SCF (SKP1-cullin-F-box) protein ligase complex. Interacts with PP2A13. Restricted to inflorescences, especially in the inflorescence meristem (IM).

It is found in the nucleus. The protein operates within protein modification; protein ubiquitination. Functionally, involved in ubiquitination and subsequent proteasomal degradation of target proteins. Together with CUL1, RBX1 and a F-box protein, it forms a SCF E3 ubiquitin ligase complex. The functional specificity of this complex depends on the type of F-box protein. In the SCF complex, it serves as an adapter that links the F-box protein to CUL1. The sequence is that of SKP1-like protein 5 (ASK5) from Arabidopsis thaliana (Mouse-ear cress).